Here is a 223-residue protein sequence, read N- to C-terminus: Urease subunit alpha (223 aa).

The segment at 1-101 (MHFTQQQLQR…LVTIHEPIAN (101 aa)) is urease gamma. The urease beta stretch occupies residues 102 to 223 (DDKIKAGEIF…LSKAKEKGFL (122 aa)).

It in the N-terminal section; belongs to the urease gamma subunit family. In the C-terminal section; belongs to the urease beta subunit family. As to quaternary structure, heterohexamer of 3 UreA (alpha) and 3 UreB (beta) subunits.

Its subcellular location is the cytoplasm. It catalyses the reaction urea + 2 H2O + H(+) = hydrogencarbonate + 2 NH4(+). The protein operates within nitrogen metabolism; urea degradation; CO(2) and NH(3) from urea (urease route): step 1/1. This Campylobacter lari protein is Urease subunit alpha.